Here is an 86-residue protein sequence, read N- to C-terminus: MSKGHSLQDPYLNTLRKEKVGVSIYLVNGIKLQGTIESFDQFVILLKNTVSQMVYKHAISTVVPVRPIRLPSATESEAGDAEPGNA.

Residues 9–68 (DPYLNTLRKEKVGVSIYLVNGIKLQGTIESFDQFVILLKNTVSQMVYKHAISTVVPVRPI) enclose the Sm domain.

The protein belongs to the Hfq family. Homohexamer.

Its function is as follows. RNA chaperone that binds small regulatory RNA (sRNAs) and mRNAs to facilitate mRNA translational regulation in response to envelope stress, environmental stress and changes in metabolite concentrations. Also binds with high specificity to tRNAs. The protein is RNA-binding protein Hfq of Pseudomonas fluorescens (strain Pf0-1).